Reading from the N-terminus, the 295-residue chain is GTPase Era (295 aa).

Positions Lys-3–Glu-170 constitute an Era-type G domain. Positions Gly-11 to Ser-18 are G1. Gly-11 to Ser-18 provides a ligand contact to GTP. The G2 stretch occupies residues Gln-37 to Asn-41. The segment at Asp-58–Gly-61 is G3. GTP contacts are provided by residues Asp-58 to Ile-62 and Asn-120 to Asp-123. The tract at residues Asn-120–Asp-123 is G4. Residues Ile-149–Ala-151 are G5. One can recognise a KH type-2 domain in the interval Leu-201–Lys-278.

The protein belongs to the TRAFAC class TrmE-Era-EngA-EngB-Septin-like GTPase superfamily. Era GTPase family. In terms of assembly, monomer.

It localises to the cytoplasm. The protein localises to the cell membrane. In terms of biological role, an essential GTPase that binds both GDP and GTP, with rapid nucleotide exchange. Plays a role in 16S rRNA processing and 30S ribosomal subunit biogenesis and possibly also in cell cycle regulation and energy metabolism. This is GTPase Era from Clostridium botulinum (strain Alaska E43 / Type E3).